Reading from the N-terminus, the 273-residue chain is Oxidized low-density lipoprotein receptor 1 (273 aa).

Residues 1–22 (MTFDDLKIQTVKDQPDEKSNGK) form a disordered region. Topologically, residues 1-36 (MTFDDLKIQTVKDQPDEKSNGKKAKGLQFLYSPWWC) are cytoplasmic. Residues Cys-36 and Cys-46 are each lipidated (S-palmitoyl cysteine). Residues 37-57 (LAAATLGVLCLGLVVTIMVLG) traverse the membrane as a helical; Signal-anchor for type II membrane protein segment. The interval 58–150 (MQLSQVSDLL…SAPCPQDWIW (93 aa)) is neck. The Extracellular segment spans residues 58-273 (MQLSQVSDLL…CQKKANLRAQ (216 aa)). Residues 64–123 (SDLLTQEQANLTHQKKKLEGQISARQQAEEASQESENELKEMIETLARKLNEKSKEQMEL) are a coiled coil. N-linked (GlcNAc...) asparagine glycosylation occurs at Asn-73. N-linked (GlcNAc...) (complex) asparagine glycosylation is present at Asn-139. 3 disulfide bridges follow: Cys-144-Cys-155, Cys-172-Cys-264, and Cys-243-Cys-256. Residues 151 to 265 (HGENCYLFSS…CILAAFSICQ (115 aa)) form the C-type lectin domain.

Homodimer; disulfide-linked. May form a hexamer composed of 3 homodimers. Interacts with HSP70. In terms of assembly, (Microbial infection) Binds to the head and beginning of the coiled stalk of N.meningitidis adhesin A (nadA) variant 3; binding can be abrogated by monoclonal antibodies against the specific regions of NadA. Binding occurs in protein microarrays, in solution and when LOX-1 is expressed on the cell surface. The intrachain disulfide-bonds prevent N-glycosylation at some sites. In terms of processing, N-glycosylated. In terms of tissue distribution, expressed at high level in endothelial cells and vascular-rich organs such as placenta, lung, liver and brain, aortic intima, bone marrow, spinal cord and substantia nigra. Also expressed at the surface of dendritic cells. Widely expressed at intermediate and low level.

It localises to the cell membrane. The protein localises to the membrane raft. Its subcellular location is the secreted. Its function is as follows. Receptor that mediates the recognition, internalization and degradation of oxidatively modified low density lipoprotein (oxLDL) by vascular endothelial cells. OxLDL is a marker of atherosclerosis that induces vascular endothelial cell activation and dysfunction, resulting in pro-inflammatory responses, pro-oxidative conditions and apoptosis. Its association with oxLDL induces the activation of NF-kappa-B through an increased production of intracellular reactive oxygen and a variety of pro-atherogenic cellular responses including a reduction of nitric oxide (NO) release, monocyte adhesion and apoptosis. In addition to binding oxLDL, it acts as a receptor for the HSP70 protein involved in antigen cross-presentation to naive T-cells in dendritic cells, thereby participating in cell-mediated antigen cross-presentation. Also involved in inflammatory process, by acting as a leukocyte-adhesion molecule at the vascular interface in endotoxin-induced inflammation. Also acts as a receptor for advanced glycation end (AGE) products, activated platelets, monocytes, apoptotic cells and both Gram-negative and Gram-positive bacteria. (Microbial infection) May serve as a receptor for adhesin A variant 3 (nadA) of N.meningitidis. The chain is Oxidized low-density lipoprotein receptor 1 (OLR1) from Homo sapiens (Human).